Consider the following 569-residue polypeptide: Glutamate--tRNA ligase (569 aa).

Residues 108–118 carry the 'HIGH' region motif; it reads PNPDFVLHLGS.

The protein belongs to the class-I aminoacyl-tRNA synthetase family. Glutamate--tRNA ligase type 2 subfamily.

It is found in the cytoplasm. It catalyses the reaction tRNA(Glu) + L-glutamate + ATP = L-glutamyl-tRNA(Glu) + AMP + diphosphate. Its function is as follows. Catalyzes the attachment of glutamate to tRNA(Glu) in a two-step reaction: glutamate is first activated by ATP to form Glu-AMP and then transferred to the acceptor end of tRNA(Glu). The polypeptide is Glutamate--tRNA ligase (Thermofilum pendens (strain DSM 2475 / Hrk 5)).